Here is a 374-residue protein sequence, read N- to C-terminus: Putative glutamate--cysteine ligase 2 (374 aa).

It belongs to the glutamate--cysteine ligase type 2 family. YbdK subfamily.

It carries out the reaction L-cysteine + L-glutamate + ATP = gamma-L-glutamyl-L-cysteine + ADP + phosphate + H(+). ATP-dependent carboxylate-amine ligase which exhibits weak glutamate--cysteine ligase activity. This Acidovorax sp. (strain JS42) protein is Putative glutamate--cysteine ligase 2.